The following is a 323-amino-acid chain: Olfactory receptor 5P58 (323 aa).

The Extracellular portion of the chain corresponds to 1-28 (MAFLEDGNHTAVTEFILVGLTDDPVLKV). N8 is a glycosylation site (N-linked (GlcNAc...) asparagine). The chain crosses the membrane as a helical span at residues 29 to 49 (ILFTIILCIYLVTVSGNLSTI). Residues 50–57 (LLIRVSSQ) lie on the Cytoplasmic side of the membrane. A helical transmembrane segment spans residues 58–78 (LHHPMYFFLSHLASVDLGYSS). Residues 79 to 102 (SVTPNMLINFLAENNTISYIGCSI) lie on the Extracellular side of the membrane. An N-linked (GlcNAc...) asparagine glycan is attached at N92. C100 and C192 are joined by a disulfide. Residues 103-123 (QFGSATFFGVLECFLLAVMAY) form a helical membrane-spanning segment. The Cytoplasmic segment spans residues 124–136 (DRFVAICNPLLYS). A helical membrane pass occupies residues 137 to 157 (IKMSTQVCVKLVVGSYIGSSL). The Extracellular portion of the chain corresponds to 158–199 (NASFVTVSIFNLLFCGPNKINHFFCDFDPLIELSCSDVSVPV). The chain crosses the membrane as a helical span at residues 200–220 (AVTSCSAGLITMITVFVIAVS). Topologically, residues 221-240 (YTYILITVLKMRSTEGRHKA) are cytoplasmic. Residues 241-261 (FSTCTSHLTAVTLFYGTVTFI) traverse the membrane as a helical segment. The Extracellular segment spans residues 262–274 (YVMPKSNYSTDQN). N268 carries an N-linked (GlcNAc...) asparagine glycan. The chain crosses the membrane as a helical span at residues 275 to 295 (KVVSVFYMVVIPMLNPLIYSL). The Cytoplasmic segment spans residues 296 to 323 (RNNEIKGALKRQLGKKIFSQSNILFCKS).

This sequence belongs to the G-protein coupled receptor 1 family.

The protein localises to the cell membrane. Functionally, potential odorant receptor. This chain is Olfactory receptor 5P58, found in Mus musculus (Mouse).